Here is a 248-residue protein sequence, read N- to C-terminus: MTESERTSHLDILYENQRGIMLCGVPYFSEKSLLNFDPAPWVDQHFVASPVSTKTATCPDPSWEWAWQRWYIDMSGDVDESGWQYGFSFTMNNWHGKPVSLHSFVRRRRWIRKRKKKELRRDELPLVPESFTISSSYPIQRSSTQTRSSFEDDSSDFDLSEVTTIPALLRALQDSRIDREKLEALATFLASASIDEKVYVKNCKKDLLKNFVFEHSCRKANELLNASLTAAEASTSQVALRESPTPQD.

Functionally, has a role in meiosis. This is Meiotically up-regulated gene 65 protein (mug65) from Schizosaccharomyces pombe (strain 972 / ATCC 24843) (Fission yeast).